We begin with the raw amino-acid sequence, 165 residues long: Group 10 secretory phospholipase A2 (165 aa).

The signal sequence occupies residues 1–31 (MGPLPVCLPIMLLLLLPSLLLLLLLPGPGSG). The propeptide occupies 32–42 (EASRILRVHRR). 8 disulfides stabilise this stretch: C53-C111, C67-C157, C69-C85, C84-C139, C90-C164, C91-C132, C100-C125, and C118-C130. Positions 68, 70, and 72 each coordinate Ca(2+). The active site involves H88. A Ca(2+)-binding site is contributed by D89. N113 carries N-linked (GlcNAc...) asparagine glycosylation. D133 is an active-site residue.

It belongs to the phospholipase A2 family. In terms of assembly, interacts with PLA2R1; this interaction mediates PLA2G10 clearance and inactivation. Ca(2+) is required as a cofactor. In terms of tissue distribution, found in spleen, thymus, peripheral blood leukocytes, pancreas, lung, and colon. Expressed in neuronal fibers in dorsal root ganglia and in peripheral tissues including stomach, white adipose tissue and prostate (at protein level).

The protein localises to the secreted. It is found in the lysosome. The protein resides in the cytoplasmic vesicle. It localises to the secretory vesicle. Its subcellular location is the acrosome. It carries out the reaction a 1,2-diacyl-sn-glycero-3-phosphocholine + H2O = a 1-acyl-sn-glycero-3-phosphocholine + a fatty acid + H(+). It catalyses the reaction 1-hexadecanoyl-2-(9Z-octadecenoyl)-sn-glycero-3-phosphocholine + H2O = 1-hexadecanoyl-sn-glycero-3-phosphocholine + (9Z)-octadecenoate + H(+). The catalysed reaction is 1-octadecanoyl-2-(5Z,8Z,11Z,14Z-eicosatetraenoyl)-sn-glycero-3-phosphocholine + H2O = 1-octadecanoyl-sn-glycero-3-phosphocholine + (5Z,8Z,11Z,14Z)-eicosatetraenoate + H(+). The enzyme catalyses 1,2-dihexadecanoyl-sn-glycero-3-phosphocholine + H2O = 1-hexadecanoyl-sn-glycero-3-phosphocholine + hexadecanoate + H(+). It carries out the reaction 1-hexadecanoyl-2-(9Z-octadecenoyl)-sn-glycero-3-phosphoglycerol + H2O = 1-hexadecanoyl-sn-glycero-3-phosphoglycerol + (9Z)-octadecenoate + H(+). It catalyses the reaction 1,2-dihexadecanoyl-sn-glycero-3-phospho-(1'-sn-glycerol) + H2O = 1-hexadecanoyl-sn-glycero-3-phospho-(1'-sn-glycerol) + hexadecanoate + H(+). The catalysed reaction is 1-hexadecanoyl-2-(9Z-octadecenoyl)-sn-glycero-3-phospho-L-serine + H2O = 1-hexadecanoyl-sn-glycero-3-phospho-L-serine + (9Z)-octadecenoate + H(+). The enzyme catalyses 1-hexadecanoyl-2-(9Z,12Z-octadecadienoyl)-sn-glycero-3-phosphoethanolamine + H2O = 1-hexadecanoyl-sn-glycero-3-phosphoethanolamine + (9Z,12Z)-octadecadienoate + H(+). It carries out the reaction 1-hexadecanoyl-2-(9Z-octadecenoyl)-sn-glycero-3-phosphate + H2O = 1-hexadecanoyl-sn-glycero-3-phosphate + (9Z)-octadecenoate + H(+). It catalyses the reaction 1-O-hexadecyl-2-acetyl-sn-glycero-3-phosphocholine + H2O = 1-O-hexadecyl-sn-glycero-3-phosphocholine + acetate + H(+). With respect to regulation, inhibited by methyl indoxam. Its function is as follows. Secretory calcium-dependent phospholipase A2 that primarily targets extracellular phospholipids. Hydrolyzes the ester bond of the fatty acyl group attached at sn-2 position of phospholipids with preference for phosphatidylcholines and phosphatidylglycerols over phosphatidylethanolamines. Preferentially releases sn-2 omega-6 and omega-3 polyunsaturated fatty acyl (PUFA) chains over saturated fatty acyls. Contributes to phospholipid remodeling of very low-density lipoprotein (VLDL), low-density lipoprotein (LDL) and high-density lipoprotein (HDL) particles. Hydrolyzes LDL phospholipids releasing unsaturated fatty acids that regulate macrophage differentiation toward foam cells. Efficiently hydrolyzes and inactivates platelet activating factor (PAF), a potent lipid mediator present in oxidized LDL. May act in an autocrine and paracrine manner. Secreted by lung epithelium, targets membrane phospholipids of infiltrating eosinophils, releasing arachidonate and boosting eicosanoid and cysteinyl leukotriene synthesis involved in airway inflammatory response. Secreted by gut epithelium, hydrolyzes dietary and biliary phosphatidylcholines in the gastrointestinal lumen. Plays a stem cell regulator role in colon epithelium. Within intracellular compartment, mediates Paneth-like cell differentiation and its stem cell supporting functions by inhibiting the Wnt signaling pathway in intestinal stem cell (ISC). Secreted in the intestinal lumen upon inflammation, acts in an autocrine way and promotes prostaglandin E2 synthesis that stimulates Wnt signaling pathway in ISCs and tissue regeneration. May participate in hair follicle morphogenesis by regulating phosphatidylethanolamines metabolism at the outermost epithelial layer and facilitating melanin synthesis. By releasing lysophosphatidylcholines (LPCs) at sperm acrosome, controls sperm cell capacitation, acrosome reaction and overall fertility. May promote neurite outgrowth in neuron fibers involved in nociception. Contributes to lipid remodeling of cellular membranes and generation of lipid mediators involved in pathogen clearance. Cleaves sn-2 fatty acyl chains of phosphatidylglycerols and phosphatidylethanolamines, which are major components of membrane phospholipids in bacteria. Displays bactericidal activity against Gram-positive bacteria by directly hydrolyzing phospholipids of the bacterial membrane. In pulmonary epithelium, may contribute to host defense response against adenoviral infection. Prevents adenovirus entry into host cells by hydrolyzing host cell plasma membrane, releasing C16:0 LPCs that inhibit virus-mediated membrane fusion and viral infection. Likely prevents adenoviral entry into the endosomes of host cells. May play a role in maturation and activation of innate immune cells including macrophages, group 2 innate lymphoid cells and mast cells. This Homo sapiens (Human) protein is Group 10 secretory phospholipase A2 (PLA2G10).